We begin with the raw amino-acid sequence, 114 residues long: Macrophage migration inhibitory factor homolog (114 aa).

Pro2 serves as the catalytic Proton acceptor; via imino nitrogen. Substrate contacts are provided by Lys33 and Ile65.

It belongs to the MIF family.

It localises to the secreted. It carries out the reaction L-dopachrome = 5,6-dihydroxyindole-2-carboxylate. The enzyme catalyses 3-phenylpyruvate = enol-phenylpyruvate. Its function is as follows. Tautomerization of the methyl ester of L-dopachrome. Inhibits migration of human peripheral blood mononuclear cells. The protein is Macrophage migration inhibitory factor homolog of Trichinella spiralis (Trichina worm).